A 218-amino-acid polypeptide reads, in one-letter code: Grancalcin (218 aa).

EF-hand domains follow at residues 49–84 (SSAG…SGIS), 85–119 (GTYS…KELW), 120–155 (SALN…MGYR), and 156–191 (LSPQ…ALTD). 9 residues coordinate Ca(2+): Asp103, Asp105, Thr107, Lys109, Asp133, Asp135, Ser137, Thr139, and Glu144.

Homodimer. Interacts with SRI and LCP1.

The protein resides in the cytoplasm. The protein localises to the cytoplasmic granule membrane. Functionally, calcium-binding protein that may play a role in the adhesion of neutrophils to fibronectin. May play a role in the formation of focal adhesions. The sequence is that of Grancalcin (GCA) from Pongo abelii (Sumatran orangutan).